We begin with the raw amino-acid sequence, 308 residues long: Aspartate carbamoyltransferase catalytic subunit (308 aa).

Arginine 55 and threonine 56 together coordinate carbamoyl phosphate. An L-aspartate-binding site is contributed by lysine 83. Residues arginine 105, histidine 133, and glutamine 136 each coordinate carbamoyl phosphate. L-aspartate is bound by residues arginine 166 and arginine 223. 2 residues coordinate carbamoyl phosphate: glycine 264 and proline 265.

The protein belongs to the aspartate/ornithine carbamoyltransferase superfamily. ATCase family. In terms of assembly, heterododecamer (2C3:3R2) of six catalytic PyrB chains organized as two trimers (C3), and six regulatory PyrI chains organized as three dimers (R2).

The catalysed reaction is carbamoyl phosphate + L-aspartate = N-carbamoyl-L-aspartate + phosphate + H(+). The protein operates within pyrimidine metabolism; UMP biosynthesis via de novo pathway; (S)-dihydroorotate from bicarbonate: step 2/3. Functionally, catalyzes the condensation of carbamoyl phosphate and aspartate to form carbamoyl aspartate and inorganic phosphate, the committed step in the de novo pyrimidine nucleotide biosynthesis pathway. The protein is Aspartate carbamoyltransferase catalytic subunit of Salinispora arenicola (strain CNS-205).